A 908-amino-acid polypeptide reads, in one-letter code: Glutamate receptor ionotropic, kainate 2 (908 aa).

A signal peptide spans 1–31; that stretch reads MKIISPVLSNLVFSRSIKVLLCLLWIGYSQG. Residues 32–561 lie on the Extracellular side of the membrane; that stretch reads TTHVLRFGGI…VFSFLNPLSP (530 aa). N-linked (GlcNAc...) asparagine glycans are attached at residues asparagine 67, asparagine 73, asparagine 275, asparagine 378, asparagine 412, asparagine 423, and asparagine 430. A disulfide bridge links cysteine 96 with cysteine 347. Proline 516, alanine 518, and arginine 523 together coordinate L-glutamate. An N-linked (GlcNAc...) asparagine glycan is attached at asparagine 546. Residues 562–582 form a helical membrane-spanning segment; the sequence is DIWMYILLAYLGVSCVLFVIA. Topologically, residues 583-638 are cytoplasmic; the sequence is RFSPYEWYNPHPCNPDSDVVENNFTLLNSFWFGVGALMQQGSELMPKALSTRIVGG. Residues 639–659 traverse the membrane as a helical segment; the sequence is IWWFFTLIIISSYTANLAAFL. Over 660–819 the chain is Extracellular; that stretch reads TVERMESPID…KEASALGVQN (160 aa). 3 residues coordinate L-glutamate: alanine 689, threonine 690, and glutamate 738. Cysteine 750 and cysteine 804 are oxidised to a cystine. Asparagine 751 carries N-linked (GlcNAc...) asparagine glycosylation. The chain crosses the membrane as a helical span at residues 820 to 840; that stretch reads IGGIFIVLAAGLVLSVFVAVG. The Cytoplasmic portion of the chain corresponds to 841 to 908; sequence EFLYKSKKNA…RRLPGKETMA (68 aa). 2 positions are modified to phosphoserine; by PKC: serine 846 and serine 868. Residue lysine 886 forms a Glycyl lysine isopeptide (Lys-Gly) (interchain with G-Cter in SUMO1) linkage.

It belongs to the glutamate-gated ion channel (TC 1.A.10.1) family. GRIK2 subfamily. Homotetramer and heterotetramer with GRIK5. Tetramers may be formed by the dimerization of dimers. Assembles into a kainate-gated homomeric channel that does not bind AMPA. Can form functional heteromeric receptors with GRIK4 and GRIK5. Can form functional heteromeric receptors with GRIK3. Interacts with DLG4. Interacts with NETO2. Interacts (via C-terminus) with KLHL17 (via kelch repeats); the interaction targets GRIK2 for degradation via ubiquitin-proteasome pathway. Post-translationally, sumoylation mediates kainate receptor-mediated endocytosis and regulates synaptic transmission. Sumoylation is enhanced by PIAS3 and desumoylated by SENP1. In terms of processing, ubiquitinated. Ubiquitination regulates the GRIK2 levels at the synapse by leading kainate receptor degradation through proteasome. Phosphorylated by PKC at Ser-868 upon agonist activation, this directly enhance sumoylation. In terms of tissue distribution, highest expression is found in the olfactory lobe, piriform cortex, dentate gyrus, hippocampus, granular cell layer of the cerebellum, and in caudate-putamen.

It is found in the cell membrane. Its subcellular location is the postsynaptic cell membrane. It carries out the reaction Ca(2+)(in) = Ca(2+)(out). The catalysed reaction is Na(+)(in) = Na(+)(out). With respect to regulation, cold receptor activity activated by temperatures between 10-19 degrees Celsius. Its function is as follows. Ionotropic glutamate receptor that functions as a cation-permeable ligand-gated ion channel, gated by L-glutamate and the glutamatergic agonist kainic acid. L-glutamate acts as an excitatory neurotransmitter at many synapses in the central nervous system. Binding of the excitatory neurotransmitter L-glutamate induces a conformation change, leading to the opening of the cation channel, and thereby converts the chemical signal to an electrical impulse. The receptor then desensitizes rapidly and enters a transient inactive state, characterized by the presence of bound agonist. Modulates cell surface expression of NETO2. In association with GRIK3, involved in presynaptic facilitation of glutamate release at hippocampal mossy fiber synapses. Independent of its ionotropic glutamate receptor activity, acts as a thermoreceptor conferring sensitivity to cold temperatures. Functions in dorsal root ganglion neurons. The chain is Glutamate receptor ionotropic, kainate 2 (Grik2) from Rattus norvegicus (Rat).